Reading from the N-terminus, the 711-residue chain is Polyribonucleotide nucleotidyltransferase (711 aa).

Mg(2+) contacts are provided by Asp487 and Asp493. The 60-residue stretch at 554–613 (PRIHTMKISAEKIKDVIGKGGAVIRALTEETGTTIEIEDDGTIKIAATEGAAAKEAIRRI) folds into the KH domain. An S1 motif domain is found at 623–691 (GRIYTGKVAR…RQGRVRLSMK (69 aa)). The tract at residues 691–711 (KEAVEKPAEEAAAEAPAAKEE) is disordered.

This sequence belongs to the polyribonucleotide nucleotidyltransferase family. As to quaternary structure, component of the RNA degradosome, which is a multiprotein complex involved in RNA processing and mRNA degradation. It depends on Mg(2+) as a cofactor.

The protein localises to the cytoplasm. The catalysed reaction is RNA(n+1) + phosphate = RNA(n) + a ribonucleoside 5'-diphosphate. Its function is as follows. Involved in mRNA degradation. Catalyzes the phosphorolysis of single-stranded polyribonucleotides processively in the 3'- to 5'-direction. The chain is Polyribonucleotide nucleotidyltransferase from Vibrio parahaemolyticus serotype O3:K6 (strain RIMD 2210633).